Reading from the N-terminus, the 460-residue chain is Argininosuccinate lyase (460 aa).

The protein belongs to the lyase 1 family. Argininosuccinate lyase subfamily.

The protein localises to the cytoplasm. It carries out the reaction 2-(N(omega)-L-arginino)succinate = fumarate + L-arginine. It functions in the pathway amino-acid biosynthesis; L-arginine biosynthesis; L-arginine from L-ornithine and carbamoyl phosphate: step 3/3. In Parvibaculum lavamentivorans (strain DS-1 / DSM 13023 / NCIMB 13966), this protein is Argininosuccinate lyase.